Consider the following 234-residue polypeptide: 7-cyano-7-deazaguanine synthase (234 aa).

An ATP-binding site is contributed by 13-23; the sequence is LSGGQDSTTCL. Residues Cys193, Cys201, Cys204, and Cys207 each contribute to the Zn(2+) site.

The protein belongs to the QueC family. Zn(2+) is required as a cofactor.

It catalyses the reaction 7-carboxy-7-deazaguanine + NH4(+) + ATP = 7-cyano-7-deazaguanine + ADP + phosphate + H2O + H(+). Its pathway is purine metabolism; 7-cyano-7-deazaguanine biosynthesis. Functionally, catalyzes the ATP-dependent conversion of 7-carboxy-7-deazaguanine (CDG) to 7-cyano-7-deazaguanine (preQ(0)). This Chromobacterium violaceum (strain ATCC 12472 / DSM 30191 / JCM 1249 / CCUG 213 / NBRC 12614 / NCIMB 9131 / NCTC 9757 / MK) protein is 7-cyano-7-deazaguanine synthase.